Reading from the N-terminus, the 485-residue chain is MATEPKKAAAQNSPEDEGLLIVKIEEEEFIHGQDTCLQRSELLKQELCRQLFRQFCYQDSPGPREALSRLRELCCQWLKPEIHTKEQILELLVLEQFLTILPGDLQAWVHEHYPESGEEAVTILEDLERGTDEAVLQVQAHEHGQEIFQKKVSPPGPALNVKLQPVETKAHFDSSEPQLLWDCDNESENSRSMPKLEIFEKIESQRIISGRISGYISEASGESQDICKSAGRVKRQWEKESGESQRLSSAQDEGFGKILTHKNTVRGEIISHDGCERRLNLNSNEFTHQKSCKHGTCDQSFKWNSDFINHQIIYAGEKNHQYGKSFKSPKLAKHAAVFSGDKTHQCNECGKAFRHSSKLARHQRIHTGERCYECNECGKSFAESSDLTRHRRIHTGERPFGCKECGRAFNLNSHLIRHQRIHTREKPYECSECGKTFRVSSHLIRHFRIHTGEKPYECSECGRAFSQSSNLSQHQRIHMRENLLM.

Lys-23 participates in a covalent cross-link: Glycyl lysine isopeptide (Lys-Gly) (interchain with G-Cter in SUMO2). The region spanning 62 to 127 (GPREALSRLR…EEAVTILEDL (66 aa)) is the SCAN box domain. Residues Lys-162 and Lys-195 each participate in a glycyl lysine isopeptide (Lys-Gly) (interchain with G-Cter in SUMO2) cross-link. Residues 290 to 314 (KSCKHGTCDQSFKWNSDFINHQIIY) form a C2H2-type 1; degenerate zinc finger. 5 consecutive C2H2-type zinc fingers follow at residues 344–366 (HQCNECGKAFRHSSKLARHQRIH), 372–394 (YECNECGKSFAESSDLTRHRRIH), 400–422 (FGCKECGRAFNLNSHLIRHQRIH), 428–450 (YECSECGKTFRVSSHLIRHFRIH), and 456–478 (YECSECGRAFSQSSNLSQHQRIH).

Belongs to the krueppel C2H2-type zinc-finger protein family. In terms of tissue distribution, expressed specifically in testis.

It localises to the nucleus. May be involved in transcriptional regulation. The sequence is that of Zinc finger protein 165 (ZNF165) from Homo sapiens (Human).